The primary structure comprises 264 residues: S-adenosylmethionine decarboxylase proenzyme (264 aa).

Residue S112 is the Schiff-base intermediate with substrate; via pyruvic acid of the active site. S112 is subject to Pyruvic acid (Ser); by autocatalysis. Residue H117 is the Proton acceptor; for processing activity of the active site. C140 serves as the catalytic Proton donor; for catalytic activity.

It belongs to the prokaryotic AdoMetDC family. Type 2 subfamily. In terms of assembly, heterooctamer of four alpha and four beta chains arranged as a tetramer of alpha/beta heterodimers. Requires pyruvate as cofactor. In terms of processing, is synthesized initially as an inactive proenzyme. Formation of the active enzyme involves a self-maturation process in which the active site pyruvoyl group is generated from an internal serine residue via an autocatalytic post-translational modification. Two non-identical subunits are generated from the proenzyme in this reaction, and the pyruvate is formed at the N-terminus of the alpha chain, which is derived from the carboxyl end of the proenzyme. The post-translation cleavage follows an unusual pathway, termed non-hydrolytic serinolysis, in which the side chain hydroxyl group of the serine supplies its oxygen atom to form the C-terminus of the beta chain, while the remainder of the serine residue undergoes an oxidative deamination to produce ammonia and the pyruvoyl group blocking the N-terminus of the alpha chain.

It carries out the reaction S-adenosyl-L-methionine + H(+) = S-adenosyl 3-(methylsulfanyl)propylamine + CO2. It participates in amine and polyamine biosynthesis; S-adenosylmethioninamine biosynthesis; S-adenosylmethioninamine from S-adenosyl-L-methionine: step 1/1. Functionally, catalyzes the decarboxylation of S-adenosylmethionine to S-adenosylmethioninamine (dcAdoMet), the propylamine donor required for the synthesis of the polyamines spermine and spermidine from the diamine putrescine. The sequence is that of S-adenosylmethionine decarboxylase proenzyme from Sodalis glossinidius (strain morsitans).